Reading from the N-terminus, the 90-residue chain is Phosphoribosyl-ATP pyrophosphatase (90 aa).

The protein belongs to the PRA-PH family.

Its subcellular location is the cytoplasm. The enzyme catalyses 1-(5-phospho-beta-D-ribosyl)-ATP + H2O = 1-(5-phospho-beta-D-ribosyl)-5'-AMP + diphosphate + H(+). The protein operates within amino-acid biosynthesis; L-histidine biosynthesis; L-histidine from 5-phospho-alpha-D-ribose 1-diphosphate: step 2/9. The polypeptide is Phosphoribosyl-ATP pyrophosphatase (hisE) (Streptomyces coelicolor (strain ATCC BAA-471 / A3(2) / M145)).